Here is a 117-residue protein sequence, read N- to C-terminus: Immunoglobulin heavy variable 3-21 (117 aa).

Positions 1 to 19 (MELGLRWVFLVAILEGVQC) are cleaved as a signal peptide. Residues 20-44 (EVQLVESGGGLVKPGGSLRLSCAAS) form a framework-1 region. The Ig-like domain occupies 20-117 (EVQLVESGGG…EDTAVYYCAR (98 aa)). An intrachain disulfide couples C41 to C115. A complementarity-determining-1 region spans residues 45–52 (GFTFSSYS). The tract at residues 53–69 (MNWVRQAPGKGLEWVSS) is framework-2. A complementarity-determining-2 region spans residues 70–77 (ISSSSSYI). The interval 78–115 (YYADSVKGRFTISRDNAKNSLYLQMNSLRAEDTAVYYC) is framework-3. Residues 116–117 (AR) form a complementarity-determining-3 region.

Immunoglobulins are composed of two identical heavy chains and two identical light chains; disulfide-linked.

Its subcellular location is the secreted. It is found in the cell membrane. Functionally, v region of the variable domain of immunoglobulin heavy chains that participates in the antigen recognition. Immunoglobulins, also known as antibodies, are membrane-bound or secreted glycoproteins produced by B lymphocytes. In the recognition phase of humoral immunity, the membrane-bound immunoglobulins serve as receptors which, upon binding of a specific antigen, trigger the clonal expansion and differentiation of B lymphocytes into immunoglobulins-secreting plasma cells. Secreted immunoglobulins mediate the effector phase of humoral immunity, which results in the elimination of bound antigens. The antigen binding site is formed by the variable domain of one heavy chain, together with that of its associated light chain. Thus, each immunoglobulin has two antigen binding sites with remarkable affinity for a particular antigen. The variable domains are assembled by a process called V-(D)-J rearrangement and can then be subjected to somatic hypermutations which, after exposure to antigen and selection, allow affinity maturation for a particular antigen. This Homo sapiens (Human) protein is Immunoglobulin heavy variable 3-21.